An 874-amino-acid chain; its full sequence is Coatomer subunit gamma-1 (874 aa).

The span at 1–11 (MLKKFDKKDEE) shows a compositional bias: basic and acidic residues. The segment at 1 to 21 (MLKKFDKKDEESGGGSNPLQH) is disordered. 4 HEAT repeats span residues 64–101 (TEAT…IAED), 283–320 (KELA…KHPS), 322–355 (VTAC…GSES), and 356–392 (SIDR…KYPR). Residue Thr594 is modified to Phosphothreonine. An interaction with ZNF289/ARFGAP2 region spans residues 609 to 874 (RQEIFQEQLA…PVDIILASVG (266 aa)).

Belongs to the COPG family. Oligomeric complex that consists of at least the alpha, beta, beta', gamma, delta, epsilon and zeta subunits. Interacts with ZNF289/ARFGAP2 through its C-terminal appendage domain. Interacts with EGFR upon EGF treatment; interaction is essential for regulation of EGF-dependent nuclear transport of EGFR by retrograde trafficking from the Golgi to the ER. The coatomer interacts with KDEL receptors; the interaction is important for retrograde trafficking of KDEL-bearing proteins from the Golgi to the endoplasmic reticulum. Interacts with COPB1. Interacts with TMED10 (via C-terminus). Interacts with TMED2, TMED3, TMED7 and TMED9.

It is found in the cytoplasm. The protein localises to the cytosol. Its subcellular location is the golgi apparatus membrane. It localises to the cytoplasmic vesicle. The protein resides in the COPI-coated vesicle membrane. Its function is as follows. The coatomer is a cytosolic protein complex that binds to dilysine motifs and reversibly associates with Golgi non-clathrin-coated vesicles, which further mediate biosynthetic protein transport from the ER, via the Golgi up to the trans Golgi network. Coatomer complex is required for budding from Golgi membranes, and is essential for the retrograde Golgi-to-ER transport of dilysine-tagged proteins. In mammals, the coatomer can only be recruited by membranes associated to ADP-ribosylation factors (ARFs), which are small GTP-binding proteins; the complex also influences the Golgi structural integrity, as well as the processing, activity, and endocytic recycling of LDL receptors. Required for limiting lipid storage in lipid droplets. Involved in lipid homeostasis by regulating the presence of perilipin family members PLIN2 and PLIN3 at the lipid droplet surface and promoting the association of adipocyte triglyceride lipase (PNPLA2) with the lipid droplet surface to mediate lipolysis. The polypeptide is Coatomer subunit gamma-1 (Copg1) (Mus musculus (Mouse)).